The primary structure comprises 178 residues: ATP-dependent protease subunit HslV (178 aa).

Threonine 2 is an active-site residue. Residues glycine 157, cysteine 160, and threonine 163 each coordinate Na(+).

It belongs to the peptidase T1B family. HslV subfamily. As to quaternary structure, a double ring-shaped homohexamer of HslV is capped on each side by a ring-shaped HslU homohexamer. The assembly of the HslU/HslV complex is dependent on binding of ATP.

It is found in the cytoplasm. The catalysed reaction is ATP-dependent cleavage of peptide bonds with broad specificity.. Allosterically activated by HslU binding. In terms of biological role, protease subunit of a proteasome-like degradation complex believed to be a general protein degrading machinery. This Hamiltonella defensa subsp. Acyrthosiphon pisum (strain 5AT) protein is ATP-dependent protease subunit HslV.